We begin with the raw amino-acid sequence, 428 residues long: uncharacterized protein (428 aa).

The segment at 1 to 49 (MRTQTFPPSSSSSRTTHPKKNRHSSNSSSMALVTPAKSSTGAAPKQSSQ) is disordered. Positions 24–49 (SSNSSSMALVTPAKSSTGAAPKQSSQ) are enriched in polar residues.

This is an uncharacterized protein from Caenorhabditis elegans.